A 1744-amino-acid chain; its full sequence is Probable disease resistance protein At4g19520 (1744 aa).

Residues 3-163 (DGKEVYISFN…KIVADVRQKL (161 aa)) enclose the TIR 1 domain. E80 is an active-site residue. The NB-ARC domain maps to 192 to 411 (SLGIWGMAGI…VSEKEIFLDI (220 aa)). LRR repeat units lie at residues 503–526 (YEDV…AFQH), 557–581 (PPEL…GFQY), 583–602 (VELN…TKNL), 603–626 (EVLK…QYSP), 648–669 (LQHL…PKVP), 670–692 (PSIR…NHSS), 710–733 (DHRK…IVIF), 734–754 (ESLE…QGFP), 755–777 (QNLK…LCHH), 779–802 (SKLV…MSNM), 804–823 (YLAV…KELP), 824–846 (RNLK…LLET), 848–871 (SEVV…MSKL), 892–915 (PLNL…IGDL), 917–939 (LLDT…MHNL), 941–963 (PLKV…LPKV), 987–1010 (YEHR…IRWM), 1011–1035 (PSLK…DFSK), 1037–1059 (LSLR…SLQL), and 1062–1086 (AHGC…TFSN). Residues 1399-1559 (RNNDVFVSFH…KVANDIRKKL (161 aa)) form the TIR 2 domain.

This sequence belongs to the disease resistance TIR-NB-LRR family.

It catalyses the reaction NAD(+) + H2O = ADP-D-ribose + nicotinamide + H(+). Its function is as follows. Probable disease resistance protein. This Arabidopsis thaliana (Mouse-ear cress) protein is Probable disease resistance protein At4g19520.